A 196-amino-acid polypeptide reads, in one-letter code: MSEALSASALATLFIDARTHSAWRETPVSDAQLRDLYEMVRLGPTSANCSPGRLLFVTTPQAKARLKPALSSGNVEKTMQAPVTAIVAWDSEFYEALPTLFPYADARAWFTSSPAVAEETAFRNSSLQAGYLIMACRALGLDTGPMSGFDRAAVDAEFFSGTPWKSNLLINIGYGDSEKLHPRLPRLAFEDACAIV.

It belongs to the nitroreductase family. HadB/RutE subfamily. FMN is required as a cofactor.

It catalyses the reaction 3-hydroxypropanoate + NADP(+) = 3-oxopropanoate + NADPH + H(+). Functionally, may reduce toxic product malonic semialdehyde to 3-hydroxypropionic acid, which is excreted. This is Probable malonic semialdehyde reductase RutE from Cronobacter sakazakii (strain ATCC BAA-894) (Enterobacter sakazakii).